Here is a 138-residue protein sequence, read N- to C-terminus: Basic phospholipase A2 homolog 7 (138 aa).

Positions 1–16 (MRTLWLMAVLLVGVEG) are cleaved as a signal peptide. 6 disulfides stabilise this stretch: Cys-42–Cys-131, Cys-44–Cys-60, Cys-59–Cys-111, Cys-65–Cys-138, Cys-66–Cys-104, and Cys-91–Cys-102. The tract at residues 121 to 133 (KKKKINLKLFCKK) is important for membrane-damaging activities in eukaryotes and bacteria; heparin-binding.

It belongs to the phospholipase A2 family. Group II subfamily. K49 sub-subfamily. Expressed by the venom gland.

It localises to the secreted. Snake venom phospholipase A2 homolog that lacks enzymatic activity. Is myotoxic and displays edema-inducing activities. A model of myotoxic mechanism has been proposed: an apo Lys49-PLA2 is activated by the entrance of a hydrophobic molecule (e.g. fatty acid) at the hydrophobic channel of the protein leading to a reorientation of a monomer. This reorientation causes a transition between 'inactive' to 'active' states, causing alignment of C-terminal and membrane-docking sites (MDoS) side-by-side and putting the membrane-disruption sites (MDiS) in the same plane, exposed to solvent and in a symmetric position for both monomers. The MDoS region stabilizes the toxin on membrane by the interaction of charged residues with phospholipid head groups. Subsequently, the MDiS region destabilizes the membrane with penetration of hydrophobic residues. This insertion causes a disorganization of the membrane, allowing an uncontrolled influx of ions (i.e. calcium and sodium), and eventually triggering irreversible intracellular alterations and cell death. This chain is Basic phospholipase A2 homolog 7, found in Craspedocephalus gramineus (Bamboo pit viper).